The sequence spans 456 residues: Protein odr-4 homolog (456 aa).

A compositionally biased stretch (low complexity) spans 374–401; sequence IESSKNNNNNNNNNNNNNNNNNNNNSKL. A disordered region spans residues 374–403; that stretch reads IESSKNNNNNNNNNNNNNNNNNNNNSKLSN. Residues 436 to 456 form a helical membrane-spanning segment; the sequence is YLIIIISVLVLMVAFYFKFFV.

Belongs to the ODR-4 family.

The protein resides in the membrane. In terms of biological role, may play a role in the trafficking of a subset of G-protein coupled receptors. The polypeptide is Protein odr-4 homolog (Dictyostelium discoideum (Social amoeba)).